The following is a 185-amino-acid chain: TATA-box-binding protein 2 (185 aa).

2 consecutive repeat copies span residues 7 to 84 and 100 to 178.

The protein belongs to the TBP family.

Its function is as follows. General factor that plays a role in the activation of archaeal genes transcribed by RNA polymerase. Binds specifically to the TATA box promoter element which lies close to the position of transcription initiation. The sequence is that of TATA-box-binding protein 2 from Methanosarcina acetivorans (strain ATCC 35395 / DSM 2834 / JCM 12185 / C2A).